The sequence spans 465 residues: Tetratricopeptide repeat protein 38 (465 aa).

3 TPR repeats span residues 104-137, 176-209, and 248-281; these read REQL…HPTD, SYVK…EPTD, and CHNY…SLQA.

Belongs to the TTC38 family.

The polypeptide is Tetratricopeptide repeat protein 38 (Ttc38) (Mus musculus (Mouse)).